Here is a 193-residue protein sequence, read N- to C-terminus: Potassium-transporting ATPase KdpC subunit (193 aa).

A helical membrane pass occupies residues 14-34; the sequence is ITFTFLVLCGLVYPLIVTGIA.

The protein belongs to the KdpC family. As to quaternary structure, the system is composed of three essential subunits: KdpA, KdpB and KdpC.

It localises to the cell membrane. Its function is as follows. Part of the high-affinity ATP-driven potassium transport (or Kdp) system, which catalyzes the hydrolysis of ATP coupled with the electrogenic transport of potassium into the cytoplasm. This subunit acts as a catalytic chaperone that increases the ATP-binding affinity of the ATP-hydrolyzing subunit KdpB by the formation of a transient KdpB/KdpC/ATP ternary complex. This chain is Potassium-transporting ATPase KdpC subunit, found in Bacillus cereus (strain Q1).